A 377-amino-acid polypeptide reads, in one-letter code: Actin-related protein 2/3 complex subunit 1 (377 aa).

WD repeat units follow at residues 9-48 (ILPKPSYEHAFNSQRTEFVTTTATNQVELYEQDGNGWKHA), 53-92 (DHDKIVTCVDWAPKSNRIVTCSQDRNAYVYEKRPDGTWKQ), 98-139 (RLNR…WVSK), 144-183 (PLRSTILSLDWHPNNVLLAAGCADRKAYVLSAYVRDVDAK), and 203-242 (PSGGWVHAVGFSPSGNALAYAGHDSSVTIAYPSAPEQPPR). Positions 293-313 (GTSKTSFTHTGNTGEGREEEG) are disordered. Residues 342–376 (VHQNMIATLRPYAGTPGNITAFTSSGTDGRVVLWT) form a WD 6 repeat.

It belongs to the WD repeat ARPC1 family. Component of the Arp2/3 complex composed of arp2, act2, arc1/p41-ARC, arc2/p34-ARC, arc3/p21-ARC, arc4/p20-ARC and arc5/p16-ARC.

Its subcellular location is the cytoplasm. The protein resides in the cytoskeleton. The protein localises to the actin patch. In terms of biological role, functions as a component of the Arp2/3 complex which is involved in regulation of actin polymerization and together with an activating nucleation-promoting factor (NPF) mediates the formation of branched actin networks. In Schizosaccharomyces pombe (strain 972 / ATCC 24843) (Fission yeast), this protein is Actin-related protein 2/3 complex subunit 1 (arc1).